A 264-amino-acid chain; its full sequence is Glutamate racemase (264 aa).

Substrate-binding positions include 10–11 (DS) and 42–43 (YG). Cys-73 functions as the Proton donor/acceptor in the catalytic mechanism. Position 74 to 75 (74 to 75 (NT)) interacts with substrate. Cys-183 acts as the Proton donor/acceptor in catalysis. Position 184 to 185 (184 to 185 (TH)) interacts with substrate.

It belongs to the aspartate/glutamate racemases family.

It catalyses the reaction L-glutamate = D-glutamate. Its pathway is cell wall biogenesis; peptidoglycan biosynthesis. Provides the (R)-glutamate required for cell wall biosynthesis. In Streptococcus pyogenes serotype M18 (strain MGAS8232), this protein is Glutamate racemase.